The chain runs to 228 residues: N-acetyltransferase family 8 member 3 (228 aa).

The next 2 helical transmembrane spans lie at 36 to 56 (MLLL…LFLA) and 58 to 78 (GSWL…WLLA). An N-acetyltransferase domain is found at 61–217 (LLVLLSTLTL…RNSPMICLKY (157 aa)).

It belongs to the camello family.

Its subcellular location is the nucleus membrane. It localises to the cytoplasm. The protein resides in the perinuclear region. It catalyses the reaction L-lysyl-[protein] + acetyl-CoA = N(6)-acetyl-L-lysyl-[protein] + CoA + H(+). Has histone acetyltransferase activity in vitro, with specificity for histone H4. The chain is N-acetyltransferase family 8 member 3 from Rattus norvegicus (Rat).